Reading from the N-terminus, the 384-residue chain is 8-amino-7-oxononanoate synthase (384 aa).

Substrate is bound at residue arginine 21. Residue 108 to 109 coordinates pyridoxal 5'-phosphate; it reads GF. Histidine 133 lines the substrate pocket. Serine 179, histidine 207, and threonine 233 together coordinate pyridoxal 5'-phosphate. The residue at position 236 (lysine 236) is an N6-(pyridoxal phosphate)lysine. Threonine 352 provides a ligand contact to substrate.

This sequence belongs to the class-II pyridoxal-phosphate-dependent aminotransferase family. BioF subfamily. Homodimer. It depends on pyridoxal 5'-phosphate as a cofactor.

The enzyme catalyses 6-carboxyhexanoyl-[ACP] + L-alanine + H(+) = (8S)-8-amino-7-oxononanoate + holo-[ACP] + CO2. Its pathway is cofactor biosynthesis; biotin biosynthesis. In terms of biological role, catalyzes the decarboxylative condensation of pimeloyl-[acyl-carrier protein] and L-alanine to produce 8-amino-7-oxononanoate (AON), [acyl-carrier protein], and carbon dioxide. This is 8-amino-7-oxononanoate synthase from Escherichia coli O6:K15:H31 (strain 536 / UPEC).